The sequence spans 467 residues: Hydroxymethylglutaryl-CoA synthase erg13A (467 aa).

A35 is a (3S)-3-hydroxy-3-methylglutaryl-CoA binding site. E86 (proton donor/acceptor) is an active-site residue. 7 residues coordinate (3S)-3-hydroxy-3-methylglutaryl-CoA: C118, T160, S209, H259, K268, N334, and S368. The active-site Acyl-thioester intermediate is C118. H259 functions as the Proton donor/acceptor in the catalytic mechanism.

The protein belongs to the thiolase-like superfamily. HMG-CoA synthase family.

The enzyme catalyses acetoacetyl-CoA + acetyl-CoA + H2O = (3S)-3-hydroxy-3-methylglutaryl-CoA + CoA + H(+). It participates in metabolic intermediate biosynthesis; (R)-mevalonate biosynthesis; (R)-mevalonate from acetyl-CoA: step 2/3. Functionally, hydroxymethylglutaryl-CoA synthase; part of the first module of ergosterol biosynthesis pathway that includes the early steps of the pathway, conserved across all eukaryotes, and which results in the formation of mevalonate from acetyl-coenzyme A (acetyl-CoA). Erg13A and erg13B condense acetyl-CoA with acetoacetyl-CoA to form hydroxymethylglutaryl-CoA (HMG-CoA). The first module starts with the action of the cytosolic acetyl-CoA acetyltransferase erg10B that catalyzes the formation of acetoacetyl-CoA. The hydroxymethylglutaryl-CoA synthases erg13A and erg13B then condense acetyl-CoA with acetoacetyl-CoA to form HMG-CoA. The rate-limiting step of the early module is the reduction to mevalonate by the 3-hydroxy-3-methylglutaryl-coenzyme A (HMG-CoA) reductases hmg1 and hmg2. Mevalonate is also a precursor for the extracellular siderophore triacetylfusarinine C (TAFC). The protein is Hydroxymethylglutaryl-CoA synthase erg13A of Aspergillus fumigatus (strain ATCC MYA-4609 / CBS 101355 / FGSC A1100 / Af293) (Neosartorya fumigata).